The primary structure comprises 484 residues: Protein nucleotidyltransferase YdiU (484 aa).

ATP contacts are provided by G87, G89, R90, K110, D122, G123, R173, and R180. D249 functions as the Proton acceptor in the catalytic mechanism. Positions 250 and 259 each coordinate Mg(2+). D259 contacts ATP.

Belongs to the SELO family. It depends on Mg(2+) as a cofactor. Mn(2+) is required as a cofactor.

It carries out the reaction L-seryl-[protein] + ATP = 3-O-(5'-adenylyl)-L-seryl-[protein] + diphosphate. The catalysed reaction is L-threonyl-[protein] + ATP = 3-O-(5'-adenylyl)-L-threonyl-[protein] + diphosphate. The enzyme catalyses L-tyrosyl-[protein] + ATP = O-(5'-adenylyl)-L-tyrosyl-[protein] + diphosphate. It catalyses the reaction L-histidyl-[protein] + UTP = N(tele)-(5'-uridylyl)-L-histidyl-[protein] + diphosphate. It carries out the reaction L-seryl-[protein] + UTP = O-(5'-uridylyl)-L-seryl-[protein] + diphosphate. The catalysed reaction is L-tyrosyl-[protein] + UTP = O-(5'-uridylyl)-L-tyrosyl-[protein] + diphosphate. In terms of biological role, nucleotidyltransferase involved in the post-translational modification of proteins. It can catalyze the addition of adenosine monophosphate (AMP) or uridine monophosphate (UMP) to a protein, resulting in modifications known as AMPylation and UMPylation. The chain is Protein nucleotidyltransferase YdiU from Lachnoclostridium phytofermentans (strain ATCC 700394 / DSM 18823 / ISDg) (Clostridium phytofermentans).